Consider the following 249-residue polypeptide: Testis-expressed protein 101 (249 aa).

The N-terminal stretch at 1 to 25 (MGTPRIQHLLILLVLGASLLTSGLE) is a signal peptide. 2 N-linked (GlcNAc...) asparagine glycosylation sites follow: N45 and N159. Residues 140–211 (CPTCVALGTC…PMFVREACPH (72 aa)) enclose the UPAR/Ly6 domain. N222 carries GPI-anchor amidated asparagine lipidation. The propeptide at 223–249 (GATCLPIPVWGLQLLLPLLLPSFIHFS) is removed in mature form.

In terms of assembly, interacts with VAMP3. Interacts with LY6K. Interacts with DPEP3; co-localized on the cell surface of spermatocytes, spermatids, and testicular spermatozoa, co-localized only in cytoplasmic droplets of caput and corpus epididymal sperm. Interacts with ADAM5. In terms of processing, N-glycosylated; by high mannose and/or biantennary complex and/or certain types of hybrid oligosaccharides; possesses different oligosaccharides chains according to its subcellular localization in the testis. Sheds from membrane raft by ACE and released from the cell surface of epididymal sperm while it passes through the caput epididymis leading to disappearance of TEX101 on spermatozoa; is essential to produce fertile spermatozoa. In terms of tissue distribution, detected in testis and spermatogonia. Not detected in spermatocytes. Detected in blood leukocytes.

The protein resides in the cell membrane. It localises to the membrane raft. The protein localises to the cytoplasmic vesicle. Its subcellular location is the secretory vesicle. It is found in the acrosome. The protein resides in the secreted. In terms of biological role, plays a role in fertilization by controlling binding of sperm to zona pellucida and migration of spermatozoa into the oviduct. May play a role in signal transduction and promote protein tyrosine phosphorylation. This is Testis-expressed protein 101 from Homo sapiens (Human).